Here is a 337-residue protein sequence, read N- to C-terminus: MNTEATHDQNEAQSTGVRLRNAREQLGLSQQAVAERLCLKVSTVRDIEEDKAPADLASTFLRGYIRSYARLVHIPEEELLPGLEKQAPVRPSKVAPMQSFSLGKRRKKRDGWLMTFTWLVLFVVVGLTGAWWWQNHKAQQEELTTMVDQSSAELNAGGDSAQSVPLDTSEAASQDSTPAPTAPVDSTATNAVPQTPDASATTTAPAADAQQNAVVAPSQANVDTATTAPAATGDTASLPTDQAGVATSAVDQNALVMNFTADCWLEVTDATGKKLFSGMQRKDGNLNLTGQAPYKLKIGAPAAVQIQYQGKPVDLSRFIRTNQVARLTLNAEQSPAQ.

Topologically, residues 1 to 111 (MNTEATHDQN…LGKRRKKRDG (111 aa)) are cytoplasmic. The HTH cro/C1-type domain maps to 19-71 (LRNAREQLGLSQQAVAERLCLKVSTVRDIEEDKAPADLASTFLRGYIRSYARL). Positions 30-49 (QQAVAERLCLKVSTVRDIEE) form a DNA-binding region, H-T-H motif. The helical; Signal-anchor for type II membrane protein transmembrane segment at 112 to 132 (WLMTFTWLVLFVVVGLTGAWW) threads the bilayer. The Periplasmic portion of the chain corresponds to 133 to 337 (WQNHKAQQEE…TLNAEQSPAQ (205 aa)). The disordered stretch occupies residues 155-220 (NAGGDSAQSV…QNAVVAPSQA (66 aa)). Residues 160–192 (SAQSVPLDTSEAASQDSTPAPTAPVDSTATNAV) show a composition bias toward polar residues. Low complexity predominate over residues 193-217 (PQTPDASATTTAPAADAQQNAVVAP).

This sequence belongs to the RodZ family.

The protein resides in the cell inner membrane. Functionally, cytoskeletal protein that is involved in cell-shape control through regulation of the length of the long axis. The chain is Cytoskeleton protein RodZ from Citrobacter koseri (strain ATCC BAA-895 / CDC 4225-83 / SGSC4696).